Reading from the N-terminus, the 110-residue chain is UPF0060 membrane protein Ajs_2087 (110 aa).

Transmembrane regions (helical) follow at residues 7–27, 33–53, 63–83, and 86–106; these read LALFLLTAVAEIVGCYLPWLW, SAWLLVPAAASLALFAWLLTL, AAYGGVYVAVALVWLWTVDGV, and GPWDWLGVAVTLCGMAIIAFA.

The protein belongs to the UPF0060 family.

It is found in the cell inner membrane. This chain is UPF0060 membrane protein Ajs_2087, found in Acidovorax sp. (strain JS42).